The chain runs to 203 residues: Histidine biosynthesis bifunctional protein HisIE (203 aa).

A phosphoribosyl-AMP cyclohydrolase region spans residues 1 to 108 (MELDFDKMNG…GEKNEEPVMF (108 aa)). Residues 109–203 (LKALQDFIDK…ERHSSTWKKH (95 aa)) form a phosphoribosyl-ATP pyrophosphohydrolase region.

This sequence in the N-terminal section; belongs to the PRA-CH family. It in the C-terminal section; belongs to the PRA-PH family.

It localises to the cytoplasm. The catalysed reaction is 1-(5-phospho-beta-D-ribosyl)-ATP + H2O = 1-(5-phospho-beta-D-ribosyl)-5'-AMP + diphosphate + H(+). It carries out the reaction 1-(5-phospho-beta-D-ribosyl)-5'-AMP + H2O = 1-(5-phospho-beta-D-ribosyl)-5-[(5-phospho-beta-D-ribosylamino)methylideneamino]imidazole-4-carboxamide. It functions in the pathway amino-acid biosynthesis; L-histidine biosynthesis; L-histidine from 5-phospho-alpha-D-ribose 1-diphosphate: step 2/9. The protein operates within amino-acid biosynthesis; L-histidine biosynthesis; L-histidine from 5-phospho-alpha-D-ribose 1-diphosphate: step 3/9. This chain is Histidine biosynthesis bifunctional protein HisIE, found in Bacteroides thetaiotaomicron (strain ATCC 29148 / DSM 2079 / JCM 5827 / CCUG 10774 / NCTC 10582 / VPI-5482 / E50).